Here is a 135-residue protein sequence, read N- to C-terminus: Transcriptional activator protein (135 aa).

Positions lysine 17–arginine 32 match the Nuclear localization signal motif. The segment at cysteine 37 to histidine 54 is a zinc-finger region. The interval histidine 120 to leucine 135 is transactivation.

This sequence belongs to the geminiviridae transcriptional activator protein family. As to quaternary structure, monomer. Homodimer. Homooligomer. Self-interaction correlates with nuclear localization and efficient activation of transcription. Monomers suppress local silencing by interacting with and inactivating host adenosine kinase 2 (ADK2) in the cytoplasm. Interacts with and inhibits host SNF1 kinase. Binds to ssDNA. May interact with host RPS27A. In terms of processing, phosphorylated.

It localises to the host nucleus. The protein resides in the host cytoplasm. Functionally, multifunctional protein that modulates host antiviral defenses and promotes host attractiveness to insect vectors. Acts as a suppressor of RNA-mediated gene silencing, also known as post-transcriptional gene silencing (PTGS), a mechanism of plant viral defense that limits the accumulation of viral RNAs. TrAP suppresses the host RNA silencing by inhibiting adenosine kinase 2 (ADK2), a kinase involved in a general methylation pathway. Also suppresses the host basal defense by interacting with and inhibiting SNF1 kinase, a key regulator of cell metabolism implicated in innate antiviral defense. Its function is as follows. Inhibits signal transduction by the phytohormone jasmonate, making the infected plant more attractive to aphids, which are the second host to play a role as a dissemination vector. Acts by binding to ubiquitin precursor RPS27A, thereby preventing ubiquitin degradation of JAZ. This is Transcriptional activator protein from Capsicum annuum (Capsicum pepper).